Reading from the N-terminus, the 840-residue chain is SLIT and NTRK-like protein 6 (840 aa).

A signal peptide spans 1–18 (MKLWTYLLYPSLLACLSL). In terms of domain architecture, LRRNT 1 spans 22-67 (SPMPSVRGSCDTLCNCEEKDGIMIINCEEKGINKLSQISVPPSRPF). Residues 23–609 (PMPSVRGSCD…LTDAVPLSVL (587 aa)) lie on the Extracellular side of the membrane. LRR repeat units lie at residues 89 to 110 (NALS…AFNG), 113 to 134 (LLKQ…TFHG), 137 to 158 (NLEF…AFSK), 161 to 182 (RLKV…IFRF), and 184 to 205 (PLTH…GFLE). The LRRCT 1 domain occupies 218-269 (NKWACNCELLQLKNWLENMPPQSIIGDVICYSPPPFKGSVLSRLKKESFCPT). The LRRNT 2 domain occupies 319 to 360 (PSTQLPVPYCPIPCNCKVLSPSGLLIHCQERNIESLSDLQPP). LRR repeat units lie at residues 363 to 384 (NPRK…DLTD), 387 to 408 (TLEM…SFMN), 411 to 432 (RLQK…MFLG), 435 to 456 (SLEY…TFNP), 459 to 480 (KLKV…IFLG), and 482 to 503 (PLTR…NILD). An LRRCT 2 domain is found at 516 to 567 (NPWDCSCDLVGLQQWIHKLGKGTMTDDILCTSPGHLDKKELKALNSDLLCPG). A helical membrane pass occupies residues 610-630 (ILGLLIVFITIVFCAAGIVVF). Over 631 to 840 (VLHRRRRYKK…DYLEVLEQQT (210 aa)) the chain is Cytoplasmic. The segment covering 717–726 (QRSLLERENH) has biased composition (basic and acidic residues). The segment at 717–736 (QRSLLERENHSPLTGSNMKY) is disordered. The span at 727 to 736 (SPLTGSNMKY) shows a compositional bias: polar residues.

The protein belongs to the SLITRK family. In terms of tissue distribution, in the embryo, expressed in otic cyst, lateral trunk epidermis and underlying mesodermal tissue, limb bud, maxillary process, cochlea, retina, tongue, tooth primordium, central nervous system, and primordia of visceral organs including lung, gastrointestinal tract and pancreas. In the central nervous system, expressed primarily in dorsal thalamus, cerebellum and medulla.

The protein resides in the cell membrane. Functionally, regulator of neurite outgrowth required for normal hearing and vision. This Mus musculus (Mouse) protein is SLIT and NTRK-like protein 6 (Slitrk6).